Here is an 840-residue protein sequence, read N- to C-terminus: Recyclin-1 (840 aa).

The F-box domain occupies 1–48 (MDDLLKVPEIVTNIASYLSTVDYLSFQQVNKRVYAIINGKNDSKYWSL). At Ser-409 the chain carries Phosphoserine.

As to quaternary structure, interacts with SKP1.

It localises to the cytoplasm. The protein resides in the bud neck. It is found in the cell tip. Functionally, involved in recycling plasma membrane proteins internalized by endocytosis. Required for recycling of the v-SNARE SNC1. This Saccharomyces cerevisiae (strain ATCC 204508 / S288c) (Baker's yeast) protein is Recyclin-1 (RCY1).